Reading from the N-terminus, the 393-residue chain is 1-deoxy-D-xylulose 5-phosphate reductoisomerase (393 aa).

NADPH is bound by residues threonine 10, glycine 11, serine 12, isoleucine 13, arginine 37, glutamine 38, and asparagine 124. Lysine 125 is a binding site for 1-deoxy-D-xylulose 5-phosphate. Residue glutamate 126 participates in NADPH binding. Aspartate 150 provides a ligand contact to Mn(2+). Positions 151, 152, 179, and 202 each coordinate 1-deoxy-D-xylulose 5-phosphate. Glutamate 152 provides a ligand contact to Mn(2+). An NADPH-binding site is contributed by glycine 208. 1-deoxy-D-xylulose 5-phosphate-binding residues include serine 215, asparagine 220, lysine 221, and glutamate 224. Position 224 (glutamate 224) interacts with Mn(2+).

It belongs to the DXR family. Mg(2+) serves as cofactor. The cofactor is Mn(2+).

The enzyme catalyses 2-C-methyl-D-erythritol 4-phosphate + NADP(+) = 1-deoxy-D-xylulose 5-phosphate + NADPH + H(+). It participates in isoprenoid biosynthesis; isopentenyl diphosphate biosynthesis via DXP pathway; isopentenyl diphosphate from 1-deoxy-D-xylulose 5-phosphate: step 1/6. Its function is as follows. Catalyzes the NADPH-dependent rearrangement and reduction of 1-deoxy-D-xylulose-5-phosphate (DXP) to 2-C-methyl-D-erythritol 4-phosphate (MEP). The chain is 1-deoxy-D-xylulose 5-phosphate reductoisomerase from Cupriavidus taiwanensis (strain DSM 17343 / BCRC 17206 / CCUG 44338 / CIP 107171 / LMG 19424 / R1) (Ralstonia taiwanensis (strain LMG 19424)).